Consider the following 288-residue polypeptide: Bis(5'-nucleosyl)-tetraphosphatase, symmetrical (288 aa).

This sequence belongs to the Ap4A hydrolase family.

It catalyses the reaction P(1),P(4)-bis(5'-adenosyl) tetraphosphate + H2O = 2 ADP + 2 H(+). Functionally, hydrolyzes diadenosine 5',5'''-P1,P4-tetraphosphate to yield ADP. The protein is Bis(5'-nucleosyl)-tetraphosphatase, symmetrical of Pseudomonas putida (strain W619).